Here is a 266-residue protein sequence, read N- to C-terminus: Hydroxyethylthiazole kinase (266 aa).

Met-43 is a substrate binding site. ATP is bound by residues Arg-119 and Thr-166. Gly-193 provides a ligand contact to substrate.

It belongs to the Thz kinase family. It depends on Mg(2+) as a cofactor.

It catalyses the reaction 5-(2-hydroxyethyl)-4-methylthiazole + ATP = 4-methyl-5-(2-phosphooxyethyl)-thiazole + ADP + H(+). Its pathway is cofactor biosynthesis; thiamine diphosphate biosynthesis; 4-methyl-5-(2-phosphoethyl)-thiazole from 5-(2-hydroxyethyl)-4-methylthiazole: step 1/1. Functionally, catalyzes the phosphorylation of the hydroxyl group of 4-methyl-5-beta-hydroxyethylthiazole (THZ). The sequence is that of Hydroxyethylthiazole kinase from Methanococcus maripaludis (strain C5 / ATCC BAA-1333).